The sequence spans 342 residues: Oxygen-dependent coproporphyrinogen-III oxidase (342 aa).

S98 lines the substrate pocket. A divalent metal cation is bound by residues H102 and H112. Residue H112 is the Proton donor of the active site. 114 to 116 (NYR) is a substrate binding site. Residues H146 and H176 each contribute to the a divalent metal cation site. The tract at residues 266–301 (YVEFNLVWDRGTIFGLQTNGRTESILMSLPPLARWE) is important for dimerization.

This sequence belongs to the aerobic coproporphyrinogen-III oxidase family. In terms of assembly, homodimer. A divalent metal cation is required as a cofactor.

The protein localises to the cytoplasm. The catalysed reaction is coproporphyrinogen III + O2 + 2 H(+) = protoporphyrinogen IX + 2 CO2 + 2 H2O. The protein operates within porphyrin-containing compound metabolism; protoporphyrin-IX biosynthesis; protoporphyrinogen-IX from coproporphyrinogen-III (O2 route): step 1/1. Its function is as follows. Involved in the heme and chlorophyll biosynthesis. Catalyzes the aerobic oxidative decarboxylation of propionate groups of rings A and B of coproporphyrinogen-III to yield the vinyl groups in protoporphyrinogen-IX. This chain is Oxygen-dependent coproporphyrinogen-III oxidase, found in Prochlorococcus marinus (strain MIT 9312).